The following is a 691-amino-acid chain: Elongation factor G (691 aa).

Positions 8–282 (ERVRNIGIAA…AVVDYLPAPV (275 aa)) constitute a tr-type G domain. Residues 17-24 (AHIDAGKT), 81-85 (DTPGH), and 135-138 (NKMD) contribute to the GTP site.

Belongs to the TRAFAC class translation factor GTPase superfamily. Classic translation factor GTPase family. EF-G/EF-2 subfamily.

It localises to the cytoplasm. Functionally, catalyzes the GTP-dependent ribosomal translocation step during translation elongation. During this step, the ribosome changes from the pre-translocational (PRE) to the post-translocational (POST) state as the newly formed A-site-bound peptidyl-tRNA and P-site-bound deacylated tRNA move to the P and E sites, respectively. Catalyzes the coordinated movement of the two tRNA molecules, the mRNA and conformational changes in the ribosome. This Prochlorococcus marinus (strain MIT 9211) protein is Elongation factor G.